The sequence spans 354 residues: DNA integrity scanning protein DisA (354 aa).

Residues 6–144 (DDELKKILKI…GDIKYVLRDS (139 aa)) enclose the DAC domain. ATP is bound by residues Gly-73, Leu-91, and 104–108 (TRHRT).

The protein belongs to the DisA family. As to quaternary structure, homooctamer. The cofactor is Mg(2+).

The enzyme catalyses 2 ATP = 3',3'-c-di-AMP + 2 diphosphate. Its function is as follows. Participates in a DNA-damage check-point that is active prior to asymmetric division when DNA is damaged. DisA forms globular foci that rapidly scan along the chromosomes during sporulation, searching for lesions. When a lesion is present, DisA pauses at the lesion site. This triggers a cellular response that culminates in a temporary block in sporulation initiation. Also has diadenylate cyclase activity, catalyzing the condensation of 2 ATP molecules into cyclic di-AMP (c-di-AMP). c-di-AMP acts as a signaling molecule that couples DNA integrity with progression of sporulation. The rise in c-di-AMP level generated by DisA while scanning the chromosome, operates as a positive signal that advances sporulation; upon encountering a lesion, the DisA focus arrests at the damaged site and halts c-di-AMP synthesis. This chain is DNA integrity scanning protein DisA, found in Clostridium perfringens (strain 13 / Type A).